The following is a 1581-amino-acid chain: Calmodulin-regulated spectrin-associated protein 1 (1581 aa).

The Calponin-homology (CH) domain maps to 215-330 (ESPAHQKVRY…FIAELFWWFE (116 aa)). Residues serine 216, serine 370, serine 374, and serine 415 each carry the phosphoserine modification. A disordered region spans residues 351–399 (VLQQKSSRPPVPISNATKRSFLGSPAAMSPADQPPSTQPLAEGSHRYHL). The tract at residues 424–470 (RQKQQKVSQTEEIPDQRHRSNSLTRVDGQPRGAIGAWPDKKNRPVSQ) is disordered. Threonine 511 carries the post-translational modification Phosphothreonine. Phosphoserine occurs at positions 550, 553, 560, 572, and 586. Positions 603–617 (KQITTKEDERGEGRP) are enriched in basic and acidic residues. Positions 603-649 (KQITTKEDERGEGRPRTIMAKRPSEGSQPMVRKKVSGGHGSRDLNRT) are disordered. Residues serine 626, serine 718, serine 724, serine 734, and serine 736 each carry the phosphoserine modification. Positions 765–785 (ESAKLQEDMKVKEHEDKDDAS) are enriched in basic and acidic residues. 2 disordered regions span residues 765–803 (ESAK…SMSM) and 821–866 (LNSC…SKDP). 2 stretches are compositionally biased toward low complexity: residues 792–803 (LSTTSQLSSMSM) and 826–837 (TKSSTSSSQKTT). The span at 853–865 (QKREQSPGRHSKD) shows a compositional bias: basic and acidic residues. The tract at residues 867 to 888 (ASLLASELVQLHMQLEEKRRAI) is sufficient for interaction with SPTBN1. 2 coiled-coil regions span residues 869–905 (LLAS…QRLK) and 1005–1037 (DVNE…QEQL). A sufficient for interaction with calmodulin region spans residues 899 to 918 (SARQRLKLGKAAFLHVVKKG). 4 disordered regions span residues 1064–1143 (FVEP…ELPE), 1225–1251 (PDED…PGVG), 1288–1315 (QLEA…EEEK), and 1332–1428 (QALE…DWET). Serine 1069 carries the phosphoserine modification. Basic and acidic residues predominate over residues 1092–1103 (RPAELKVPKDRQ). Positions 1104 to 1132 (QGCSRSKTPTPSVETLPQSRSLPPSTHPR) are enriched in polar residues. Serine 1133 carries the phosphoserine modification. Positions 1225–1237 (PDEDGEVVGHESS) are enriched in basic and acidic residues. A coiled-coil region spans residues 1265 to 1336 (AKKRAAFLLK…RRKQQQALEE (72 aa)). The span at 1342–1353 (PKSKPKKPRPKS) shows a compositional bias: basic residues. Residues 1361 to 1372 (SDSGTKCSSTHN) are compositionally biased toward polar residues. A compositionally biased stretch (low complexity) spans 1373-1390 (LSQTHSGSSLSLASAATT). Residues serine 1378 and serine 1407 each carry the phosphoserine modification. Positions 1443 to 1576 (GPKLFKEPSS…QPKRPTVPKK (134 aa)) constitute a CKK domain. At tyrosine 1516 the chain carries Phosphotyrosine.

Belongs to the CAMSAP1 family. Interacts with spectrin via SPTBN1; the interaction is direct. Interacts with calmodulin; calcium-dependent it prevents interaction with spectrin. In terms of tissue distribution, expressed in the central nervous system.

The protein localises to the cytoplasm. Its subcellular location is the cytoskeleton. Functionally, key microtubule-organizing protein that specifically binds the minus-end of non-centrosomal microtubules and regulates their dynamics and organization. Specifically recognizes growing microtubule minus-ends and stabilizes microtubules. Acts on free microtubule minus-ends that are not capped by microtubule-nucleating proteins or other factors and protects microtubule minus-ends from depolymerization. In contrast to CAMSAP2 and CAMSAP3, tracks along the growing tips of minus-end microtubules without significantly affecting the polymerization rate: binds at the very tip of the microtubules minus-end and acts as a minus-end tracking protein (-TIP) that dissociates from microtubules after allowing tubulin incorporation. Through interaction with spectrin may regulate neurite outgrowth. This chain is Calmodulin-regulated spectrin-associated protein 1 (Camsap1), found in Mus musculus (Mouse).